Here is a 67-residue protein sequence, read N- to C-terminus: Large ribosomal subunit protein uL29 (67 aa).

It belongs to the universal ribosomal protein uL29 family.

The protein is Large ribosomal subunit protein uL29 of Ehrlichia canis (strain Jake).